A 399-amino-acid polypeptide reads, in one-letter code: 1-deoxy-D-xylulose 5-phosphate reductoisomerase (399 aa).

Residues Thr11, Gly12, Ser13, Ile14, Gly37, Asn39, and Asn125 each contribute to the NADPH site. Lys126 is a binding site for 1-deoxy-D-xylulose 5-phosphate. Glu127 is a binding site for NADPH. Asp151 provides a ligand contact to Mn(2+). 1-deoxy-D-xylulose 5-phosphate-binding residues include Ser152, Glu153, Ser177, and His200. Glu153 is a Mn(2+) binding site. Gly206 contributes to the NADPH binding site. Positions 213, 218, 219, and 222 each coordinate 1-deoxy-D-xylulose 5-phosphate. Glu222 contributes to the Mn(2+) binding site.

This sequence belongs to the DXR family. Mg(2+) serves as cofactor. It depends on Mn(2+) as a cofactor.

The catalysed reaction is 2-C-methyl-D-erythritol 4-phosphate + NADP(+) = 1-deoxy-D-xylulose 5-phosphate + NADPH + H(+). The protein operates within isoprenoid biosynthesis; isopentenyl diphosphate biosynthesis via DXP pathway; isopentenyl diphosphate from 1-deoxy-D-xylulose 5-phosphate: step 1/6. Functionally, catalyzes the NADPH-dependent rearrangement and reduction of 1-deoxy-D-xylulose-5-phosphate (DXP) to 2-C-methyl-D-erythritol 4-phosphate (MEP). This chain is 1-deoxy-D-xylulose 5-phosphate reductoisomerase, found in Nostoc sp. (strain PCC 7120 / SAG 25.82 / UTEX 2576).